Here is a 194-residue protein sequence, read N- to C-terminus: ATP-dependent Clp protease proteolytic subunit 3 (194 aa).

Residue Ser-96 is the Nucleophile of the active site. The active site involves His-121.

The protein belongs to the peptidase S14 family. In terms of assembly, fourteen ClpP subunits assemble into 2 heptameric rings which stack back to back to give a disk-like structure with a central cavity, resembling the structure of eukaryotic proteasomes.

The protein resides in the cytoplasm. It catalyses the reaction Hydrolysis of proteins to small peptides in the presence of ATP and magnesium. alpha-casein is the usual test substrate. In the absence of ATP, only oligopeptides shorter than five residues are hydrolyzed (such as succinyl-Leu-Tyr-|-NHMec, and Leu-Tyr-Leu-|-Tyr-Trp, in which cleavage of the -Tyr-|-Leu- and -Tyr-|-Trp bonds also occurs).. Cleaves peptides in various proteins in a process that requires ATP hydrolysis. Has a chymotrypsin-like activity. Plays a major role in the degradation of misfolded proteins. The sequence is that of ATP-dependent Clp protease proteolytic subunit 3 from Rhizobium johnstonii (strain DSM 114642 / LMG 32736 / 3841) (Rhizobium leguminosarum bv. viciae).